Here is a 706-residue protein sequence, read N- to C-terminus: K(+)-insensitive pyrophosphate-energized proton pump (706 aa).

Transmembrane regions (helical) follow at residues 1–21 (MTAL…AIWA), 62–82 (VVIF…GFAI), 83–103 (GAIL…RANV), 129–149 (LLVA…LIHF), and 164–184 (VALG…GGIF). Lys-186 lines the substrate pocket. 4 residues coordinate Mg(2+): Asp-189, Asp-193, Asn-216, and Asp-219. 6 helical membrane-spanning segments follow: residues 231–251 (LFET…IFFG), 263–283 (TLPL…TFFV), 300–320 (IATG…LIGF), 330–350 (GLAL…IIWI), 393–413 (IVII…GIAI), and 414–434 (ATTT…FGPV). Asp-436 serves as a coordination point for Mg(2+). The next 4 helical transmembrane spans lie at 467–487 (AVTK…LFAA), 516–536 (YVVV…AMGM), 585–605 (IIPS…IYAI), and 616–636 (AFSA…FVAI). Residues Asp-646, Asp-672, and Asp-676 each contribute to the Ca(2+) site. Lys-679 lines the substrate pocket. Residues 685 to 705 (AVNPMIKITNIVALLLLAILA) form a helical membrane-spanning segment.

Belongs to the H(+)-translocating pyrophosphatase (TC 3.A.10) family. K(+)-insensitive subfamily. As to quaternary structure, homodimer. Mg(2+) is required as a cofactor.

Its subcellular location is the cell inner membrane. It carries out the reaction diphosphate + H2O + H(+)(in) = 2 phosphate + 2 H(+)(out). In terms of biological role, proton pump that utilizes the energy of pyrophosphate hydrolysis as the driving force for proton movement across the membrane. Generates a proton motive force. This is K(+)-insensitive pyrophosphate-energized proton pump from Rhodopseudomonas palustris (strain ATCC BAA-98 / CGA009).